The following is a 116-amino-acid chain: HVA22-like protein e (116 aa).

The next 3 helical transmembrane spans lie at 12 to 32 (HSLAGPVVMLLYPLYASVIAI), 42 to 62 (QWLAYWILYSFLTLSELILQS), and 63 to 83 (LLEWIPIWYTAKLVFVAWLVL).

The protein belongs to the DP1 family. As to expression, predominantly expressed in stem.

The protein resides in the membrane. In Arabidopsis thaliana (Mouse-ear cress), this protein is HVA22-like protein e (HVA22E).